A 239-amino-acid polypeptide reads, in one-letter code: Large ribosomal subunit protein uL2 (239 aa).

2 disordered regions span residues Met-1–Ser-21 and Pro-203–Lys-239. Basic residues predominate over residues Pro-222–Lys-239.

It belongs to the universal ribosomal protein uL2 family. Part of the 50S ribosomal subunit. Forms a bridge to the 30S subunit in the 70S ribosome.

Functionally, one of the primary rRNA binding proteins. Required for association of the 30S and 50S subunits to form the 70S ribosome, for tRNA binding and peptide bond formation. It has been suggested to have peptidyltransferase activity; this is somewhat controversial. Makes several contacts with the 16S rRNA in the 70S ribosome. The sequence is that of Large ribosomal subunit protein uL2 from Pyrococcus furiosus (strain ATCC 43587 / DSM 3638 / JCM 8422 / Vc1).